The chain runs to 124 residues: Small ribosomal subunit protein uS13 (124 aa).

The segment at 99–124 (RGQRTRTNARTRKGPRKTVGVMRKKS) is disordered. Residues 101 to 124 (QRTRTNARTRKGPRKTVGVMRKKS) show a composition bias toward basic residues.

The protein belongs to the universal ribosomal protein uS13 family. As to quaternary structure, part of the 30S ribosomal subunit. Forms a loose heterodimer with protein S19. Forms two bridges to the 50S subunit in the 70S ribosome.

Located at the top of the head of the 30S subunit, it contacts several helices of the 16S rRNA. In the 70S ribosome it contacts the 23S rRNA (bridge B1a) and protein L5 of the 50S subunit (bridge B1b), connecting the 2 subunits; these bridges are implicated in subunit movement. Contacts the tRNAs in the A and P-sites. In Caldicellulosiruptor saccharolyticus (strain ATCC 43494 / DSM 8903 / Tp8T 6331), this protein is Small ribosomal subunit protein uS13.